A 181-amino-acid polypeptide reads, in one-letter code: Oligoribonuclease (181 aa).

Positions 8-171 (LIWVDLEMTG…DDIRESIAEL (164 aa)) constitute an Exonuclease domain. Y129 is an active-site residue.

This sequence belongs to the oligoribonuclease family.

Its subcellular location is the cytoplasm. Its function is as follows. 3'-to-5' exoribonuclease specific for small oligoribonucleotides. The polypeptide is Oligoribonuclease (Vibrio campbellii (strain ATCC BAA-1116)).